Here is a 272-residue protein sequence, read N- to C-terminus: Phosphatidylglycerol--prolipoprotein diacylglyceryl transferase (272 aa).

The next 4 helical transmembrane spans lie at 24–44, 64–84, 99–119, and 125–145; these read WYAL…RHLV, LLVY…VVFY, LWQG…GVML, and GLPT…GLFL. Residue arginine 147 participates in a 1,2-diacyl-sn-glycero-3-phospho-(1'-sn-glycerol) binding. 3 consecutive transmembrane segments (helical) span residues 185–205, 209–229, and 245–265; these read AAAE…LGAL, GLVT…CEFF, and MGML…AFAY.

Belongs to the Lgt family.

The protein resides in the cell inner membrane. The enzyme catalyses L-cysteinyl-[prolipoprotein] + a 1,2-diacyl-sn-glycero-3-phospho-(1'-sn-glycerol) = an S-1,2-diacyl-sn-glyceryl-L-cysteinyl-[prolipoprotein] + sn-glycerol 1-phosphate + H(+). Its pathway is protein modification; lipoprotein biosynthesis (diacylglyceryl transfer). In terms of biological role, catalyzes the transfer of the diacylglyceryl group from phosphatidylglycerol to the sulfhydryl group of the N-terminal cysteine of a prolipoprotein, the first step in the formation of mature lipoproteins. This chain is Phosphatidylglycerol--prolipoprotein diacylglyceryl transferase, found in Methylocella silvestris (strain DSM 15510 / CIP 108128 / LMG 27833 / NCIMB 13906 / BL2).